A 606-amino-acid chain; its full sequence is Putative helicase 172L (606 aa).

The Helicase ATP-binding domain occupies 59–264 (GEKTWGVRGG…WAQLRFCGYK (206 aa)). 72–79 (LCMGLGKT) lines the ATP pocket. Residues 437-586 (YIKSSNFEIS…ASYLEGKERI (150 aa)) form the Helicase C-terminal domain.

This sequence belongs to the SNF2/RAD54 helicase family.

This is Putative helicase 172L from Invertebrate iridescent virus 6 (IIV-6).